Here is a 402-residue protein sequence, read N- to C-terminus: Digeranylgeranylglycerophospholipid reductase (402 aa).

10 residues coordinate FAD: Gly-15, Glu-34, Cys-45, Ala-46, Gly-48, Arg-99, Ala-123, Asp-280, Gly-292, and Ile-293.

It belongs to the geranylgeranyl reductase family. DGGGPL reductase subfamily. FAD serves as cofactor.

The enzyme catalyses a 2,3-bis-O-phytanyl-sn-glycerol 1-phospholipid + 8 oxidized 2[4Fe-4S]-[ferredoxin] = a 2,3-bis-O-(geranylgeranyl)-sn-glycerol 1-phospholipid + 8 reduced 2[4Fe-4S]-[ferredoxin] + 16 H(+). The catalysed reaction is 2,3-bis-O-(phytanyl)-sn-glycerol 1-phosphate + 8 oxidized 2[4Fe-4S]-[ferredoxin] = 2,3-bis-O-(geranylgeranyl)-sn-glycerol 1-phosphate + 8 reduced 2[4Fe-4S]-[ferredoxin] + 16 H(+). It carries out the reaction a 2,3-bis-O-phytanyl-sn-glycerol 1-phospholipid + 8 A = a 2,3-bis-O-(geranylgeranyl)-sn-glycerol 1-phospholipid + 8 AH2. It catalyses the reaction CDP-2,3-bis-O-(geranylgeranyl)-sn-glycerol + 8 AH2 = CDP-2,3-bis-O-(phytanyl)-sn-glycerol + 8 A. The enzyme catalyses archaetidylserine + 8 AH2 = 2,3-bis-O-phytanyl-sn-glycero-3-phospho-L-serine + 8 A. It functions in the pathway membrane lipid metabolism; glycerophospholipid metabolism. Its function is as follows. Is involved in the reduction of 2,3-digeranylgeranylglycerophospholipids (unsaturated archaeols) into 2,3-diphytanylglycerophospholipids (saturated archaeols) in the biosynthesis of archaeal membrane lipids. Catalyzes the formation of archaetidic acid (2,3-di-O-phytanyl-sn-glyceryl phosphate) from 2,3-di-O-geranylgeranylglyceryl phosphate (DGGGP) via the hydrogenation of each double bond of the isoprenoid chains. Is also probably able to reduce double bonds of geranyl groups in CDP-2,3-bis-O-(geranylgeranyl)-sn-glycerol and archaetidylserine, thus acting at various stages in the biosynthesis of archaeal membrane lipids. This Methanospirillum hungatei JF-1 (strain ATCC 27890 / DSM 864 / NBRC 100397 / JF-1) protein is Digeranylgeranylglycerophospholipid reductase.